The primary structure comprises 250 residues: 5-oxoprolinase subunit A 2 (250 aa).

It belongs to the LamB/PxpA family. In terms of assembly, forms a complex composed of PxpA, PxpB and PxpC.

It carries out the reaction 5-oxo-L-proline + ATP + 2 H2O = L-glutamate + ADP + phosphate + H(+). Functionally, catalyzes the cleavage of 5-oxoproline to form L-glutamate coupled to the hydrolysis of ATP to ADP and inorganic phosphate. This chain is 5-oxoprolinase subunit A 2, found in Bordetella bronchiseptica (strain ATCC BAA-588 / NCTC 13252 / RB50) (Alcaligenes bronchisepticus).